The primary structure comprises 299 residues: Probable lipid kinase YegS (299 aa).

The region spanning 2-133 (AEFPASLLIL…IDMAQVNKQT (132 aa)) is the DAGKc domain. Residues threonine 40, 66–72 (GDGTINE), and threonine 95 each bind ATP. Residues leucine 215, aspartate 218, and leucine 220 each contribute to the Mg(2+) site. Glutamate 271 (proton acceptor) is an active-site residue.

The protein belongs to the diacylglycerol/lipid kinase family. YegS lipid kinase subfamily. It depends on Mg(2+) as a cofactor. Ca(2+) serves as cofactor.

It is found in the cytoplasm. In terms of biological role, probably phosphorylates lipids; the in vivo substrate is unknown. The sequence is that of Probable lipid kinase YegS from Shigella dysenteriae serotype 1 (strain Sd197).